The primary structure comprises 346 residues: Putative transmembrane protein ORF346 (346 aa).

Transmembrane regions (helical) follow at residues 67 to 87 (LPII…CIVY), 104 to 124 (IINP…VGLT), 134 to 154 (PPYL…SGIY), 156 to 176 (AIGD…GLFI), 181 to 201 (IILY…LCLS), and 219 to 241 (YPFS…LGSY). The segment at 294–346 (SEYPHSENGSGGSGGSGSGSGSGGSGSGGNSGSGGSGSGSSGSGGNSGSGNNG) is disordered. The segment covering 302–346 (GSGGSGGSGSGSGSGGSGSGGNSGSGGSGSGSSGSGGNSGSGNNG) has biased composition (gly residues).

The protein resides in the host membrane. The protein is Putative transmembrane protein ORF346 of Acidianus bottle-shaped virus (isolate Italy/Pozzuoli) (ABV).